The following is a 132-amino-acid chain: MYTDPIADYLTRVRNAAKANHKVVEIPASNMKKEITKILFDQGYILSYKFEDNAVQGSIKIALKYDKVTKESVIRDIQRISKPGLRKYSGSSTIPRILNGLGIAIVSTSKGLMTGKLAKQLNVGGEVICYVY.

This sequence belongs to the universal ribosomal protein uS8 family. In terms of assembly, part of the 30S ribosomal subunit. Contacts proteins S5 and S12.

One of the primary rRNA binding proteins, it binds directly to 16S rRNA central domain where it helps coordinate assembly of the platform of the 30S subunit. The protein is Small ribosomal subunit protein uS8 of Flavobacterium psychrophilum (strain ATCC 49511 / DSM 21280 / CIP 103535 / JIP02/86).